We begin with the raw amino-acid sequence, 928 residues long: Nuclear pore complex-interacting protein family member B12 (928 aa).

The helical transmembrane segment at 73 to 93 (VVITLWIVYLWVSLLKTIFWS) threads the bilayer. Disordered stretches follow at residues 242–452 (RMGH…NIKT) and 663–928 (ERLR…RRLS). Polar residues predominate over residues 252–263 (QQHSITDNSLSL). The segment covering 349–359 (PLPPSAPPSAP) has biased composition (pro residues). Composition is skewed to basic and acidic residues over residues 406–416 (DNIKTPAERLR), 698–708 (DNIKTPAERLR), 740–750 (DNIKTPAERLR), and 782–792 (DNIKTPAERLR).

Belongs to the NPIP family.

It is found in the membrane. The polypeptide is Nuclear pore complex-interacting protein family member B12 (Homo sapiens (Human)).